Here is a 275-residue protein sequence, read N- to C-terminus: Putative Ig-like V-type domain-containing protein FPV055 (275 aa).

2 consecutive Ig-like V-type domains span residues 25–122 and 140–239; these read KTFV…MNLG and PRRS…KSLS.

The sequence is that of Putative Ig-like V-type domain-containing protein FPV055 from Fowlpox virus (strain NVSL) (FPV).